Here is an 83-residue protein sequence, read N- to C-terminus: Small ribosomal subunit protein uS17 (83 aa).

It belongs to the universal ribosomal protein uS17 family. In terms of assembly, part of the 30S ribosomal subunit.

Its function is as follows. One of the primary rRNA binding proteins, it binds specifically to the 5'-end of 16S ribosomal RNA. The protein is Small ribosomal subunit protein uS17 of Ehrlichia canis (strain Jake).